Consider the following 129-residue polypeptide: Phosphoribosyl-AMP cyclohydrolase (129 aa).

D77 lines the Mg(2+) pocket. C78 provides a ligand contact to Zn(2+). Mg(2+) is bound by residues D79 and D81. Zn(2+) contacts are provided by C94 and C101.

Belongs to the PRA-CH family. In terms of assembly, homodimer. The cofactor is Mg(2+). Zn(2+) is required as a cofactor.

It is found in the cytoplasm. It catalyses the reaction 1-(5-phospho-beta-D-ribosyl)-5'-AMP + H2O = 1-(5-phospho-beta-D-ribosyl)-5-[(5-phospho-beta-D-ribosylamino)methylideneamino]imidazole-4-carboxamide. The protein operates within amino-acid biosynthesis; L-histidine biosynthesis; L-histidine from 5-phospho-alpha-D-ribose 1-diphosphate: step 3/9. Functionally, catalyzes the hydrolysis of the adenine ring of phosphoribosyl-AMP. In Methanosphaera stadtmanae (strain ATCC 43021 / DSM 3091 / JCM 11832 / MCB-3), this protein is Phosphoribosyl-AMP cyclohydrolase.